The primary structure comprises 157 residues: Protein Smg homolog (157 aa).

The protein belongs to the Smg family.

The sequence is that of Protein Smg homolog from Shewanella woodyi (strain ATCC 51908 / MS32).